A 483-amino-acid chain; its full sequence is Glutamyl-tRNA(Gln) amidotransferase subunit A (483 aa).

Residues Lys76 and Ser151 each act as charge relay system in the active site. Catalysis depends on Ser175, which acts as the Acyl-ester intermediate.

Belongs to the amidase family. GatA subfamily. As to quaternary structure, heterotrimer of A, B and C subunits.

It catalyses the reaction L-glutamyl-tRNA(Gln) + L-glutamine + ATP + H2O = L-glutaminyl-tRNA(Gln) + L-glutamate + ADP + phosphate + H(+). In terms of biological role, allows the formation of correctly charged Gln-tRNA(Gln) through the transamidation of misacylated Glu-tRNA(Gln) in organisms which lack glutaminyl-tRNA synthetase. The reaction takes place in the presence of glutamine and ATP through an activated gamma-phospho-Glu-tRNA(Gln). This chain is Glutamyl-tRNA(Gln) amidotransferase subunit A, found in Nitrosococcus oceani (strain ATCC 19707 / BCRC 17464 / JCM 30415 / NCIMB 11848 / C-107).